We begin with the raw amino-acid sequence, 151 residues long: UPF0178 protein Spea_2958 (151 aa).

The protein belongs to the UPF0178 family.

This chain is UPF0178 protein Spea_2958, found in Shewanella pealeana (strain ATCC 700345 / ANG-SQ1).